Reading from the N-terminus, the 289-residue chain is (+)-kolavelool synthase (289 aa).

Belongs to the diterpene synthase family.

It carries out the reaction (+)-kolavenyl diphosphate + H2O = (+)-kolavelool + diphosphate. Functionally, involved in the biosynthesis of (+)-O-methylkolavelool. Catalyzes the biosynthesis of (+)-kolavelool from (+)-kolavenyl diphosphate via the release of the diphosphate moiety through the nucleophilic addition of a water molecule. The chain is (+)-kolavelool synthase from Herpetosiphon aurantiacus (strain ATCC 23779 / DSM 785 / 114-95).